Here is a 207-residue protein sequence, read N- to C-terminus: Large ribosomal subunit protein uL4 (207 aa).

The interval 50–75 is disordered; that stretch reads KTKTVSEVSGTTKKPFKQKGTGNARQ.

Belongs to the universal ribosomal protein uL4 family. In terms of assembly, part of the 50S ribosomal subunit.

Its function is as follows. One of the primary rRNA binding proteins, this protein initially binds near the 5'-end of the 23S rRNA. It is important during the early stages of 50S assembly. It makes multiple contacts with different domains of the 23S rRNA in the assembled 50S subunit and ribosome. Functionally, forms part of the polypeptide exit tunnel. The sequence is that of Large ribosomal subunit protein uL4 from Rickettsia felis (strain ATCC VR-1525 / URRWXCal2) (Rickettsia azadi).